The following is a 616-amino-acid chain: Zinc metalloproteinase nas-36 (616 aa).

An N-terminal signal peptide occupies residues 1–21 (MRRFCRLLFLNSLLSISICKA). Residues 22–125 (QNPAHLVADE…SKDKTKRLRR (104 aa)) constitute a propeptide that is removed on maturation. The Peptidase M12A domain occupies 126 to 321 (SFVSDKTATW…VATINTAYCK (196 aa)). 9 disulfide bridges follow: Cys-168/Cys-320, Cys-191/Cys-210, Cys-324/Cys-345, Cys-347/Cys-356, Cys-367/Cys-396, Cys-424/Cys-444, Cys-518/Cys-549, Cys-522/Cys-554, and Cys-534/Cys-539. The N-linked (GlcNAc...) asparagine glycan is linked to Asn-173. His-218 contacts Zn(2+). Glu-219 is a catalytic residue. Positions 222 and 228 each coordinate Zn(2+). Residues 316-357 (NTAYCKEECKSEKTECEYGGYMRPSKCSECLCPDGLGGEKCE) enclose the EGF-like domain. One can recognise a CUB domain in the interval 367 to 481 (CGGILELSDE…IGFKIQVRST (115 aa)). The region spanning 506-555 (PNVWADWGEWSMCSRTCGGCGIRSRVRSCRSKKCEGRRQEFGTCNLKACP) is the TSP type-1 domain.

The cofactor is Zn(2+).

The protein resides in the secreted. In terms of biological role, mtalloprotease. Involved in molting, a process during larval stages in which a new cuticle is formed and the old cuticle is shed. This chain is Zinc metalloproteinase nas-36, found in Caenorhabditis briggsae.